The sequence spans 229 residues: Protein N-lysine methyltransferase METTL21D (229 aa).

Alanine 2 bears the N-acetylalanine mark. Serine 8 is subject to Phosphoserine. S-adenosyl-L-methionine contacts are provided by residues tryptophan 43, 75-77 (GSG), aspartate 96, tryptophan 126, alanine 143, and tyrosine 148.

It belongs to the methyltransferase superfamily. METTL21 family. In terms of assembly, interacts with ALKBH6. Interacts with ASPSCR1 and UBXN6; interaction with ASPSCR1, but not with UBXN6, enhances VCP methylation.

Its subcellular location is the cytoplasm. It catalyses the reaction L-lysyl-[protein] + 3 S-adenosyl-L-methionine = N(6),N(6),N(6)-trimethyl-L-lysyl-[protein] + 3 S-adenosyl-L-homocysteine + 3 H(+). Protein N-lysine methyltransferase that specifically trimethylates 'Lys-315' of VCP/p97; this modification may decrease VCP ATPase activity. The chain is Protein N-lysine methyltransferase METTL21D (VCPKMT) from Homo sapiens (Human).